Here is a 534-residue protein sequence, read N- to C-terminus: Protein TIC 62, chloroplastic (534 aa).

A chloroplast-targeting transit peptide spans 1–64 (MPMEVFSLTS…SSSSSSSSIR (64 aa)). The segment at 50 to 83 (NNRIRSSSSSSSSIRAQASGSTKSSTAEGIPEKT) is disordered. Polar residues predominate over residues 63–76 (IRAQASGSTKSSTA). 91–120 (VFVAGATGKVGSRTVRELIKLGFKVRAGVR) is an NADP(+) binding site. The segment at 334 to 534 (PSQRPYIPSP…ASPSPSFRKS (201 aa)) is disordered. Over residues 350-360 (DTATVSNTGPS) the composition is skewed to polar residues. The stretch at 387–408 (PLSPYTAYDDLKPPSSPSPTKP) is repeat 1. The tract at residues 387 to 532 (PLSPYTAYDD…PPASPSPSFR (146 aa)) is 3 X 22 AA approximate repeats. A compositionally biased stretch (low complexity) spans 421–432 (PTPISSDTPSSI). Residues 450–471 (SLSPYAAYPDLKPPSSPSPSVP) form repeat 2. Over residues 460–469 (LKPPSSPSPS) the composition is skewed to pro residues. Over residues 495–509 (DTPKNEEQHLHEPKS) the composition is skewed to basic and acidic residues. Repeat unit 3 spans residues 511 to 532 (PLSPYAMYEDLKPPASPSPSFR).

As to quaternary structure, part of the Tic complex. Interacts with TIC40, TIC110 and TIC55. Interacts (via C-terminus) with PETH/FNR.

It localises to the plastid. The protein localises to the chloroplast inner membrane. The protein resides in the chloroplast stroma. Involved in protein precursor import into chloroplasts. Part of the redox regulon consisting of TIC32, TIC 55 and TIC62. Has a NADPH-dependent dehydrogenase activity, but only after preincubation with lipids. In Pisum sativum (Garden pea), this protein is Protein TIC 62, chloroplastic (TIC62).